Consider the following 300-residue polypeptide: tRNA pseudouridine synthase B (300 aa).

Asp-38 serves as the catalytic Nucleophile.

The protein belongs to the pseudouridine synthase TruB family. Type 1 subfamily.

The catalysed reaction is uridine(55) in tRNA = pseudouridine(55) in tRNA. Its function is as follows. Responsible for synthesis of pseudouridine from uracil-55 in the psi GC loop of transfer RNAs. This Dehalococcoides mccartyi (strain ATCC BAA-2100 / JCM 16839 / KCTC 5957 / BAV1) protein is tRNA pseudouridine synthase B.